The following is a 622-amino-acid chain: MSTDNKQSLPAITLAAIGVVYGDIGTSPLYTLRECLSGQFGFGVERDAVFGFLSLIFWLLIFVVSIKYLTFVMRADNAGEGGILTLMSLAGRNTSARTTSMLVIMGLIGGSFFYGEVVITPAISVMSAIEGLEIVAPQLDTWIVPLSIIVLTLLFMIQKHGTAMVGKLFAPIMLTWFLILAGLGLRSIIANQEVLYALNPMWAVHFFLEYKTVSFIALGAVVLSITGGEALYADMGHFGKFPIRLAWFTVVLPSLTLNYFGQGALLLKNPEAIKNPFFLLAPDWALIPLLIIAALATVIASQAVISGVFSLTRQAVRLGYLSPMRIIHTSEMESGQIYIPFVNWMLYVAVVIVIVSFEHSSNLAAAYGIAVTGTMVLTSILSTTVARQNWHWNKYFVALILIAFLCVDIPLFTANLDKLLSGGWLPLSLGTVMFIVMTTWKSERFRLLRRMHEHGNSLEAMIASLEKSPPVRVPGTAVYMSRAINVIPFALMHNLKHNKVLHERVILLTLRTEDAPYVHNVRRVQIEQLSPTFWRVVASYGWRETPNVEEVFHRCGLEGLSCRMMETSFFMSHESLILGKRPWYLRLRGKLYLLLQRNALRAPDQFEIPPNRVIELGTQVEI.

12 helical membrane passes run 9–29 (LPAITLAAIGVVYGDIGTSPL), 49–69 (VFGFLSLIFWLLIFVVSIKYL), 103–123 (VIMGLIGGSFFYGEVVITPAI), 137–157 (PQLDTWIVPLSIIVLTLLFMI), 165–185 (VGKLFAPIMLTWFLILAGLGL), 213–233 (VSFIALGAVVLSITGGEALYA), 247–267 (WFTVVLPSLTLNYFGQGALLL), 276–296 (PFFLLAPDWALIPLLIIAALA), 337–357 (IYIPFVNWMLYVAVVIVIVSF), 363–383 (LAAAYGIAVTGTMVLTSILST), 396–416 (FVALILIAFLCVDIPLFTANL), and 419–439 (LLSGGWLPLSLGTVMFIVMTT).

It belongs to the HAK/KUP transporter (TC 2.A.72) family.

It localises to the cell inner membrane. It carries out the reaction K(+)(in) + H(+)(in) = K(+)(out) + H(+)(out). In terms of biological role, responsible for the low-affinity transport of potassium into the cell. Likely operates as a K(+):H(+) symporter. This Escherichia coli O157:H7 (strain EC4115 / EHEC) protein is Low affinity potassium transport system protein Kup.